We begin with the raw amino-acid sequence, 425 residues long: Glutamyl-tRNA reductase (425 aa).

Residues 49–52 (TCNR), serine 107, 112–114 (EPQ), and glutamine 118 each bind substrate. The Nucleophile role is filled by cysteine 50. An NADP(+)-binding site is contributed by 187–192 (GAGETI).

Belongs to the glutamyl-tRNA reductase family. In terms of assembly, homodimer.

The enzyme catalyses (S)-4-amino-5-oxopentanoate + tRNA(Glu) + NADP(+) = L-glutamyl-tRNA(Glu) + NADPH + H(+). It participates in porphyrin-containing compound metabolism; protoporphyrin-IX biosynthesis; 5-aminolevulinate from L-glutamyl-tRNA(Glu): step 1/2. Its function is as follows. Catalyzes the NADPH-dependent reduction of glutamyl-tRNA(Glu) to glutamate 1-semialdehyde (GSA). The chain is Glutamyl-tRNA reductase from Pseudomonas syringae pv. tomato (strain ATCC BAA-871 / DC3000).